The chain runs to 193 residues: dCTP deaminase (193 aa).

DCTP contacts are provided by residues 110–115 (RSSLAR), aspartate 128, 136–138 (VLE), tyrosine 171, lysine 178, and glutamine 182. Glutamate 138 acts as the Proton donor/acceptor in catalysis. Residues 169–193 (RPYNRRQDAKYRDQQGAVASRIDKD) form a disordered region.

Belongs to the dCTP deaminase family. Homotrimer.

The catalysed reaction is dCTP + H2O + H(+) = dUTP + NH4(+). It participates in pyrimidine metabolism; dUMP biosynthesis; dUMP from dCTP (dUTP route): step 1/2. Functionally, catalyzes the deamination of dCTP to dUTP. The polypeptide is dCTP deaminase (Citrobacter koseri (strain ATCC BAA-895 / CDC 4225-83 / SGSC4696)).